A 900-amino-acid polypeptide reads, in one-letter code: MLGTVIKKIVGTKNDREVKRYRKIVAQINQLEESFHKLSDDDLSGKTSEFRDRLAKGESLESILPEAFAVVREGSSRVMGMRHFDVQLIGGMVLNEGKIAEMRTGEGKTLVATLAVYLNALSSKGVHVVTVNDYLAKRDANWMRPLYEFLDMSVGVVFSGQDRDEKKAAYLCDITYGTNNEFGFDYLRDNMVFRLEDRVQRDLHFSVVDEVDSILIDEARTPLIISGAVEDSSEQYRKINQLAPLLVKQEDTDEEGSVGHYVFDESQRSIELTEDGHSFVEEWLVEQGMLAEGESLYAAGNLSLLHHVHACLKAHVIFKKNIDYVVQGDQIVIVDEHTGRTMAGRRWSEGIHQAVEAKEGVTIQAESQTLASTTFQNYFRLYEKLSGMTGTADTEAFEFQQIYGLSVIVIPTNRQVQRKDFNDLIYMSTEDKFEAIVLDIEEIVNQGRPVLVGTASIEYSELLSNYLVKKGVKHNVLNAKQHEREAEIVADAGRPGAVTIATNMAGRGTDIVLGGNLQVELAKLGENASEDEINALKADWKARNESVLAAGGLHIIGTERHESRRIDNQLRGRAGRQGDVGSSRFYLSLEDNLMRIFMSDRIKKMMMALGMEKGEAIEHKMVSNAIEKAQRKVEGRNFDIRKQLLEYDDVANDQRQVIYRQRFDMMVSEDLSEAISAMREEVVTSLVDEFIPPQSIFDMWDLEGLEEKARNEFGLELPVAKWVEEDKKLYEEPLRQKILDTFVNDYQAKEEIAGEQPFRAFEKQVLLQVLDTLWKEHLQTMDMLRQGIHLRGYAQKNPKQEYKRESFELFQGLLEQIKYEVIQIITRVKVQSAEEAEKIEAARRLQEEKTTMNMIHDSLDSLSDGGSDSADGQEYPKVGRNEPCPCGSGKKYKQCHGSLV.

ATP contacts are provided by residues glutamine 87, 105–109, and aspartate 510; that span reads GEGKT. A disordered region spans residues 857-890; the sequence is DSLDSLSDGGSDSADGQEYPKVGRNEPCPCGSGK. The segment covering 860–872 has biased composition (low complexity); sequence DSLSDGGSDSADG. Zn(2+)-binding residues include cysteine 884, cysteine 886, cysteine 895, and histidine 896.

This sequence belongs to the SecA family. Monomer and homodimer. Part of the essential Sec protein translocation apparatus which comprises SecA, SecYEG and auxiliary proteins SecDF-YajC and YidC. Zn(2+) is required as a cofactor.

It localises to the cell inner membrane. It is found in the cytoplasm. The catalysed reaction is ATP + H2O + cellular proteinSide 1 = ADP + phosphate + cellular proteinSide 2.. In terms of biological role, part of the Sec protein translocase complex. Interacts with the SecYEG preprotein conducting channel. Has a central role in coupling the hydrolysis of ATP to the transfer of proteins into and across the cell membrane, serving both as a receptor for the preprotein-SecB complex and as an ATP-driven molecular motor driving the stepwise translocation of polypeptide chains across the membrane. In Marinomonas sp. (strain MWYL1), this protein is Protein translocase subunit SecA.